A 1002-amino-acid polypeptide reads, in one-letter code: Copper-transporting ATPase HMA5 (1002 aa).

Positions 32–48 (RPRYPSMPRRPRSAAVA) are enriched in low complexity. Positions 32–63 (RPRYPSMPRRPRSAAVAGEGGEGGGGGGDGDL) are disordered. Over residues 49–60 (GEGGEGGGGGGD) the composition is skewed to gly residues. HMA domains are found at residues 75–141 (KVAV…FEAK), 153–219 (LVCR…FEAI), and 228–294 (SRID…SGDL). The Cu(+) site is built by Cys86, Cys89, Cys164, and Cys167. Transmembrane regions (helical) follow at residues 320–340 (FLWS…FMYI), 354–374 (MMSI…FVIG), 392–412 (MDVL…YSIL), 425–445 (FFET…LEIL), 585–605 (VFVP…FLAG), 624–644 (LALQ…LGLA), 943–963 (YVWA…VLFP), and 972–992 (WVAG…SLLL).

The protein belongs to the cation transport ATPase (P-type) (TC 3.A.3) family. Type IB subfamily. As to expression, expressed in root pericycle cells, xylem region of diffuse vascular bundles in the first node, and vascular tissues of peduncle, rachis and husk.

The protein resides in the cell membrane. It catalyses the reaction Cu(+)(in) + ATP + H2O = Cu(+)(out) + ADP + phosphate + H(+). Copper (Cu) transporter that plays an essential role in promoting translocation of Cu from roots to shoots. Involved in loading Cu to the xylem of the roots and other organs, including panicles. This is Copper-transporting ATPase HMA5 from Oryza sativa subsp. japonica (Rice).